The following is a 65-amino-acid chain: Chymotrypsin/elastase isoinhibitors 2 to 5 (65 aa).

Cystine bridges form between cysteine 4/cysteine 37, cysteine 13/cysteine 32, cysteine 16/cysteine 28, cysteine 20/cysteine 59, and cysteine 39/cysteine 53. In terms of domain architecture, TIL spans 4–59; the sequence is CGKNEVWTECTGCELKCGQDEKTPCALMCRPPSCECTPGRGMRRTHDGKCVPVSEC.

This sequence belongs to the serine protease inhibitor-like (TIL domain-containing) family.

Its subcellular location is the secreted. In terms of biological role, defends the organism against the host's proteinases. This Ascaris suum (Pig roundworm) protein is Chymotrypsin/elastase isoinhibitors 2 to 5.